The sequence spans 280 residues: MTNIHPTAIVEDGAQIGNNVTIEPYAIVKKNVKLCDDVVVKSYAYIDGFTTIGRGTTIWPSAMIGNKPQDLKFKGEKTFVEIGEHCEIREFAMITSSTFEGTTVSIGNNCLIMPWAHIAHNCSVGNNVVFSTHVQLAGHVQVGDCVTIGSMVGVHQFVRIGSYAMVGAMSGIRRDIPPFTIGTGNPYALGGVNKVGLQRRRVPFETRLALIKTFKRVFRSGESFQDSLGSVLEDFGDVPEVRHFVEFCRQPSKRGIERGIDCEASLDEPIDKKEGAFVES.

Belongs to the transferase hexapeptide repeat family. LpxA subfamily. As to quaternary structure, homotrimer.

It is found in the cytoplasm. The enzyme catalyses a (3R)-hydroxyacyl-[ACP] + UDP-N-acetyl-alpha-D-glucosamine = a UDP-3-O-[(3R)-3-hydroxyacyl]-N-acetyl-alpha-D-glucosamine + holo-[ACP]. The protein operates within glycolipid biosynthesis; lipid IV(A) biosynthesis; lipid IV(A) from (3R)-3-hydroxytetradecanoyl-[acyl-carrier-protein] and UDP-N-acetyl-alpha-D-glucosamine: step 1/6. Involved in the biosynthesis of lipid A, a phosphorylated glycolipid that anchors the lipopolysaccharide to the outer membrane of the cell. The sequence is that of Acyl-[acyl-carrier-protein]--UDP-N-acetylglucosamine O-acyltransferase from Chlamydia muridarum (strain MoPn / Nigg).